The primary structure comprises 77 residues: Putative antitoxin MazE7 (77 aa).

A disordered region spans residues 49 to 77; sequence REASHAETTTQAVRDEDREWEGTVGDGLG.

As to quaternary structure, forms a complex with cognate toxin MazF7.

In terms of biological role, antitoxin component of a type II toxin-antitoxin (TA) system. The sequence is that of Putative antitoxin MazE7 (mazE7) from Mycobacterium tuberculosis (strain CDC 1551 / Oshkosh).